The sequence spans 141 residues: MKTYIPKNDEQNWVVVDAAGVPLGRLATLIASRIRGKHRPDFTPNLIQGDFVVVLNAEKVALTGNKLDGKVYTRYTGYQGGLRTETAREALAKHPERVIEHAVFGMLPKGRQGRSMHNRLKVYAGETHPHTAQKPQTLEVR.

The protein belongs to the universal ribosomal protein uL13 family. As to quaternary structure, part of the 50S ribosomal subunit.

Its function is as follows. This protein is one of the early assembly proteins of the 50S ribosomal subunit, although it is not seen to bind rRNA by itself. It is important during the early stages of 50S assembly. This is Large ribosomal subunit protein uL13 from Deinococcus deserti (strain DSM 17065 / CIP 109153 / LMG 22923 / VCD115).